Here is a 63-residue protein sequence, read N- to C-terminus: Cytochrome c oxidase subunit 5C-1 (63 aa).

The helical transmembrane segment at 15–34 (SEVKELIIGSVLGLAAGGLW) threads the bilayer.

Belongs to the cytochrome c oxidase subunit 5C family.

The protein localises to the mitochondrion inner membrane. This protein is one of the nuclear-coded polypeptide chains of cytochrome c oxidase, the terminal oxidase in mitochondrial electron transport. This Helianthus annuus (Common sunflower) protein is Cytochrome c oxidase subunit 5C-1 (COX5C1).